The chain runs to 61 residues: Small ribosomal subunit protein uS14 (61 aa).

4 residues coordinate Zn(2+): C24, C27, C40, and C43.

It belongs to the universal ribosomal protein uS14 family. Zinc-binding uS14 subfamily. In terms of assembly, part of the 30S ribosomal subunit. Contacts proteins S3 and S10. Requires Zn(2+) as cofactor.

In terms of biological role, binds 16S rRNA, required for the assembly of 30S particles and may also be responsible for determining the conformation of the 16S rRNA at the A site. In Roseiflexus sp. (strain RS-1), this protein is Small ribosomal subunit protein uS14.